The sequence spans 809 residues: Interleukin-4 receptor subunit alpha (809 aa).

The first 25 residues, 1-25, serve as a signal peptide directing secretion; that stretch reads MGCLCPGLTLPVSCLILVWAAGSGS. Topologically, residues 26–231 are extracellular; sequence VKVLRLTACF…NYYEQPLEQR (206 aa). Cysteine 34 and cysteine 44 are disulfide-bonded. Residues asparagine 53 and asparagine 71 are each glycosylated (N-linked (GlcNAc...) asparagine). The cysteines at positions 74 and 86 are disulfide-linked. 3 N-linked (GlcNAc...) asparagine glycosylation sites follow: asparagine 112, asparagine 128, and asparagine 161. The 98-residue stretch at 125-222 folds into the Fibronectin type-III domain; it reads APQNLTVHAI…EWSPSTTWHN (98 aa). Phosphoserine is present on serine 163. N-linked (GlcNAc...) asparagine glycans are attached at residues asparagine 175 and asparagine 208. Positions 211–215 match the WSXWS motif motif; sequence WSEWS. Residues 232 to 255 traverse the membrane as a helical segment; that stretch reads LPLGVSISCVVILAICLSCYFSII. At 256–809 the chain is on the cytoplasmic side; sequence KIKKEWWDQI…STGPTCTSAS (554 aa). A Box 1 motif motif is present at residues 261–269; sequence WWDQIPNPA. Disordered regions lie at residues 369–397 and 441–468; these read ESEE…QEGR and SAGP…TLTQ. A compositionally biased stretch (polar residues) spans 447–468; it reads AASQGEEQPLNPESNPLATLTQ. Tyrosine 488 carries the phosphotyrosine modification. The tract at residues 514–536 is disordered; the sequence is LGQVDPSIPSAPQPSEPPTALQP. 3 positions are modified to phosphotyrosine: tyrosine 566, tyrosine 590, and tyrosine 618. The tract at residues 606 to 674 is disordered; the sequence is QSGVEASSGE…EPTVKGEDPR (69 aa). An ITIM motif motif is present at residues 695–700; the sequence is IVYSAL.

This sequence belongs to the type I cytokine receptor family. Type 4 subfamily. The functional IL4 receptor is formed by initial binding of IL4 to IL4R. Subsequent recruitment to the complex of the common gamma chain, in immune cells, creates a type I receptor and, in non-immune cells, of IL13RA1 forms a type II receptor. IL4R can also interact with the IL13/IL13RA1 complex to form a similar type II receptor. Interacts with PIK3C3. Interacts with the SH2-containing phosphatases, PTPN6/SHIP1, PTPN11/SHIP2 and INPP5D/SHIP. Interacts with JAK1 through a Box 1-containing region; inhibited by SOCS5. Interacts with SOCS5; inhibits IL4 signaling. Interacts with JAK3. Interacts with CLM1. Interacts with IL13RA2. On IL4 binding, phosphorylated on tyrosine residues in the cytoplasmic domain.

It is found in the cell membrane. It localises to the secreted. Functionally, receptor for both interleukin 4 and interleukin 13. Couples to the JAK1/2/3-STAT6 pathway. The IL4 response is involved in promoting Th2 differentiation. The IL4/IL13 responses are involved in regulating IgE production and, chemokine and mucus production at sites of allergic inflammation. In certain cell types, can signal through activation of insulin receptor substrates, IRS1/IRS2. The protein is Interleukin-4 receptor subunit alpha (IL4R) of Equus caballus (Horse).